The sequence spans 92 residues: MASPGHILIVCVCLLSMASAEAPQEPDPFTYDYHTLRIGGLTIAGILFILGILIILSKRCRCKFNQQQRTGEPDEEEGTFRSSIRRLSTRRR.

A signal peptide spans 1–20; it reads MASPGHILIVCVCLLSMASA. Topologically, residues 21 to 35 are extracellular; the sequence is EAPQEPDPFTYDYHT. Residues 36–56 form a helical membrane-spanning segment; it reads LRIGGLTIAGILFILGILIIL. The Cytoplasmic segment spans residues 57–92; it reads SKRCRCKFNQQQRTGEPDEEEGTFRSSIRRLSTRRR. Cys-60 carries the S-palmitoyl cysteine lipid modification. Residue Cys-62 is modified to S-glutathionyl cysteine; alternate. A lipid anchor (S-palmitoyl cysteine; alternate) is attached at Cys-62. The tract at residues 66–92 is disordered; that stretch reads QQQRTGEPDEEEGTFRSSIRRLSTRRR. Position 79 is a phosphothreonine (Thr-79). Ser-82 bears the Phosphoserine mark. Ser-83 is subject to Phosphoserine; by PKA and PKC. The span at 83-92 shows a compositional bias: basic residues; it reads SIRRLSTRRR. Ser-88 is modified (phosphoserine; by PKA). A Phosphothreonine; by PKC modification is found at Thr-89.

This sequence belongs to the FXYD family. Homotetramer. Monomer. Regulatory subunit of the sodium/potassium-transporting ATPase (NKA) which is composed of a catalytic alpha subunit, a non-catalytic beta subunit and an additional regulatory subunit. The monomeric form associates with NKA while the oligomeric form does not. Interacts with the catalytic alpha-1 subunit ATP1A1. Also interacts with the catalytic alpha-2 and alpha-3 subunits ATP1A2 and ATP1A3. Very little interaction with ATP1A1, ATP1A2 or ATP1A3 when phosphorylated at Ser-83. Interacts with the non-catalytic beta-1 subunit ATP1B1. Oxidative stress decreases interaction with ATP1A1 but increases interaction with ATP1B1. Post-translationally, major plasma membrane substrate for cAMP-dependent protein kinase (PKA) and protein kinase C (PKC) in several different tissues. Phosphorylated in response to insulin and adrenergic stimulation. Phosphorylation at Ser-88 stimulates sodium/potassium-transporting ATPase activity while the unphosphorylated form inhibits sodium/potassium-transporting ATPase activity. Phosphorylation increases tetramerization, decreases binding to ATP1A1 and reduces inhibition of ATP1A1 activity. Phosphorylation at Ser-83 leads to greatly reduced interaction with ATP1A1, ATP1A2 and ATP1A3. May be phosphorylated by DMPK. Palmitoylation increases half-life and stability and is enhanced upon phosphorylation at Ser-88 by PKA. In adult brain, highest levels are found in the cerebellum and in the lateral, third and fourth ventricles of the choroid plexus (at protein level). Also detected in cells of a portion of the ependymal lining of the lateral ventricle on its rostral surface posterior to the caudate putamen (at protein level). Expressed in a subset of neurons which secrete gonadotropin-releasing hormone.

Its subcellular location is the cell membrane. The protein resides in the sarcolemma. It localises to the apical cell membrane. It is found in the membrane. The protein localises to the caveola. Its subcellular location is the T-tubule. Its function is as follows. Associates with and regulates the activity of the sodium/potassium-transporting ATPase (NKA) which transports Na(+) out of the cell and K(+) into the cell. Inhibits NKA activity in its unphosphorylated state and stimulates activity when phosphorylated. Reduces glutathionylation of the NKA beta-1 subunit ATP1B1, thus reversing glutathionylation-mediated inhibition of ATP1B1. Contributes to female sexual development by maintaining the excitability of neurons which secrete gonadotropin-releasing hormone. In Rattus norvegicus (Rat), this protein is Phospholemman.